Here is an 88-residue protein sequence, read N- to C-terminus: MPKNSPIRSSLILKERRRSVESQIYHLTDRILRLTHHLELHRRDYSSQRGLWQILGKRKRLLVYLSKRNRPRYEDLIGQLSIRGLKIR.

This sequence belongs to the universal ribosomal protein uS15 family. As to quaternary structure, part of the 30S ribosomal subunit.

Its subcellular location is the plastid. The protein resides in the chloroplast. This is Small ribosomal subunit protein uS15c (rps15) from Cycas taitungensis (Prince sago).